The sequence spans 237 residues: Urease subunit alpha (237 aa).

The urease gamma stretch occupies residues Met-1–Asp-102. Residues Asn-103 to Gln-237 are urease beta.

This sequence in the N-terminal section; belongs to the urease gamma subunit family. The protein in the C-terminal section; belongs to the urease beta subunit family. Heterohexamer of 3 UreA (alpha) and 3 UreB (beta) subunits.

It is found in the cytoplasm. The catalysed reaction is urea + 2 H2O + H(+) = hydrogencarbonate + 2 NH4(+). It functions in the pathway nitrogen metabolism; urea degradation; CO(2) and NH(3) from urea (urease route): step 1/1. This chain is Urease subunit alpha, found in Helicobacter felis.